The following is a 95-amino-acid chain: Large ribosomal subunit protein eL42 (95 aa).

Cys-11, Cys-14, Cys-71, and Cys-74 together coordinate Zn(2+). A C4-type zinc finger spans residues 11–74 (CPRCNTHTEH…QVLVITCTVC (64 aa)).

It belongs to the eukaryotic ribosomal protein eL42 family. In terms of assembly, part of the 50S ribosomal subunit. Zn(2+) is required as a cofactor.

Functionally, binds to the 23S rRNA. This chain is Large ribosomal subunit protein eL42, found in Aeropyrum pernix (strain ATCC 700893 / DSM 11879 / JCM 9820 / NBRC 100138 / K1).